A 504-amino-acid polypeptide reads, in one-letter code: 13S globulin seed storage protein 2 (504 aa).

Positions 1–20 are cleaved as a signal peptide; sequence MSTKLILSFSLCLMVLSCSA. 2 cysteine pairs are disulfide-bonded: Cys46-Cys79 and Cys122-Cys320. The region spanning 51–265 is the Cupin type-1 1 domain; sequence LTASEPSRRV…FRDVDRETIS (215 aa). Disordered regions lie at residues 128-158, 214-237, and 289-314; these read SDSE…GDQH, GQSQ…DDEA, and QDFE…RSNG. Composition is skewed to basic and acidic residues over residues 144–158 and 218–231; these read RQSE…GDQH and RETR…QSRE. A Cupin type-1 2 domain is found at 326–475; sequence RNFNTPTNTY…SYDISTKEAY (150 aa).

Belongs to the 11S seed storage protein (globulins) family. In terms of assembly, hexamer; each subunit is composed of an acidic and a basic chain derived from a single precursor and linked by a disulfide bond.

Functionally, seed storage protein. The sequence is that of 13S globulin seed storage protein 2 (FA18) from Fagopyrum esculentum (Common buckwheat).